Reading from the N-terminus, the 431-residue chain is Serine hydroxymethyltransferase (431 aa).

Residues Leu127 and 131–133 (GHL) each bind (6S)-5,6,7,8-tetrahydrofolate. Position 236 is an N6-(pyridoxal phosphate)lysine (Lys236).

The protein belongs to the SHMT family. In terms of assembly, homodimer. Pyridoxal 5'-phosphate is required as a cofactor.

The protein localises to the cytoplasm. It carries out the reaction (6R)-5,10-methylene-5,6,7,8-tetrahydrofolate + glycine + H2O = (6S)-5,6,7,8-tetrahydrofolate + L-serine. It participates in one-carbon metabolism; tetrahydrofolate interconversion. It functions in the pathway amino-acid biosynthesis; glycine biosynthesis; glycine from L-serine: step 1/1. Catalyzes the reversible interconversion of serine and glycine with tetrahydrofolate (THF) serving as the one-carbon carrier. This reaction serves as the major source of one-carbon groups required for the biosynthesis of purines, thymidylate, methionine, and other important biomolecules. Also exhibits THF-independent aldolase activity toward beta-hydroxyamino acids, producing glycine and aldehydes, via a retro-aldol mechanism. This Granulibacter bethesdensis (strain ATCC BAA-1260 / CGDNIH1) protein is Serine hydroxymethyltransferase.